The sequence spans 330 residues: Inactive hydroxysteroid dehydrogenase-like protein 1 (330 aa).

An N-acetylalanine modification is found at A2. The required for mitochondria translocation stretch occupies residues 2 to 82 (AAVDSFYLLY…SGATDGIGKA (81 aa)). NADP(+) contacts are provided by residues 74 to 80 (GATDGIG), D125, and K222.

It belongs to the short-chain dehydrogenases/reductases (SDR) family. 17-beta-HSD 3 subfamily. In terms of assembly, interacts with STYXL1. Highly expressed in testis and ovary. Also detected in thyroid, spinal cord, adrenal gland, heart, placenta, skeletal muscle, small intestine, colon, spleen, prostate and pancreas.

It localises to the mitochondrion. The sequence is that of Inactive hydroxysteroid dehydrogenase-like protein 1 (HSDL1) from Homo sapiens (Human).